The chain runs to 427 residues: Glutamate-1-semialdehyde 2,1-aminomutase (427 aa).

K265 is subject to N6-(pyridoxal phosphate)lysine.

Belongs to the class-III pyridoxal-phosphate-dependent aminotransferase family. HemL subfamily. As to quaternary structure, homodimer. It depends on pyridoxal 5'-phosphate as a cofactor.

It localises to the cytoplasm. It catalyses the reaction (S)-4-amino-5-oxopentanoate = 5-aminolevulinate. Its pathway is porphyrin-containing compound metabolism; protoporphyrin-IX biosynthesis; 5-aminolevulinate from L-glutamyl-tRNA(Glu): step 2/2. This Teredinibacter turnerae (strain ATCC 39867 / T7901) protein is Glutamate-1-semialdehyde 2,1-aminomutase.